The following is a 131-amino-acid chain: Fumarate reductase subunit C (131 aa).

The next 3 helical transmembrane spans lie at 30 to 50 (EGTA…LFAL), 63 to 83 (FLQN…ALLH), and 109 to 129 (IIKS…FVAL).

The protein belongs to the FrdC family. As to quaternary structure, part of an enzyme complex containing four subunits: a flavoprotein (FrdA), an iron-sulfur protein (FrdB), and two hydrophobic anchor proteins (FrdC and FrdD).

The protein localises to the cell inner membrane. Functionally, two distinct, membrane-bound, FAD-containing enzymes are responsible for the catalysis of fumarate and succinate interconversion; fumarate reductase is used in anaerobic growth, and succinate dehydrogenase is used in aerobic growth. Anchors the catalytic components of the fumarate reductase complex to the cell inner membrane, binds quinones. The sequence is that of Fumarate reductase subunit C from Shigella boydii serotype 18 (strain CDC 3083-94 / BS512).